The sequence spans 527 residues: GMP synthase [glutamine-hydrolyzing] (527 aa).

The Glutamine amidotransferase type-1 domain maps to 4-202 (KILILDFGSQ…VLKICGAKPD (199 aa)). C81 (nucleophile) is an active-site residue. Active-site residues include H176 and E178. A GMPS ATP-PPase domain is found at 203-395 (WEMGNYIDEA…LGLPPSMVYR (193 aa)). 230–236 (SGGVDSS) contacts ATP.

As to quaternary structure, homodimer.

The catalysed reaction is XMP + L-glutamine + ATP + H2O = GMP + L-glutamate + AMP + diphosphate + 2 H(+). It participates in purine metabolism; GMP biosynthesis; GMP from XMP (L-Gln route): step 1/1. Catalyzes the synthesis of GMP from XMP. In Paraburkholderia phymatum (strain DSM 17167 / CIP 108236 / LMG 21445 / STM815) (Burkholderia phymatum), this protein is GMP synthase [glutamine-hydrolyzing].